A 358-amino-acid chain; its full sequence is NADH-quinone oxidoreductase subunit H (358 aa).

A run of 8 helical transmembrane segments spans residues 20–40, 95–115, 128–148, 168–188, 206–226, 253–273, 290–310, and 334–354; these read ITVG…IPLI, ALFY…WAVI, IGLL…IIAG, ISYE…SGSM, VFSW…ISAV, GFAF…ISAL, WGFI…AVLY, and VLIP…ISPL.

This sequence belongs to the complex I subunit 1 family. In terms of assembly, NDH-1 is composed of 14 different subunits. Subunits NuoA, H, J, K, L, M, N constitute the membrane sector of the complex.

The protein resides in the cell inner membrane. It carries out the reaction a quinone + NADH + 5 H(+)(in) = a quinol + NAD(+) + 4 H(+)(out). In terms of biological role, NDH-1 shuttles electrons from NADH, via FMN and iron-sulfur (Fe-S) centers, to quinones in the respiratory chain. The immediate electron acceptor for the enzyme in this species is believed to be ubiquinone. Couples the redox reaction to proton translocation (for every two electrons transferred, four hydrogen ions are translocated across the cytoplasmic membrane), and thus conserves the redox energy in a proton gradient. This subunit may bind ubiquinone. The protein is NADH-quinone oxidoreductase subunit H of Neisseria meningitidis serogroup C (strain 053442).